The primary structure comprises 418 residues: Putative heat shock protein HSP 90-alpha A4 (418 aa).

The ATP site is built by Asp-33, Lys-52, Phe-78, and Arg-204. 2 disordered regions span residues 255 to 289 (EDLE…TSAK) and 383 to 418 (GLGT…RMEK). Residues 265-274 (EKKKQEEGKQ) show a composition bias toward basic and acidic residues.

The protein belongs to the heat shock protein 90 family. In terms of assembly, homodimer.

It is found in the cytoplasm. Functionally, putative molecular chaperone that may promote the maturation, structural maintenance and proper regulation of specific target proteins. The polypeptide is Putative heat shock protein HSP 90-alpha A4 (HSP90AA4P) (Homo sapiens (Human)).